Reading from the N-terminus, the 330-residue chain is RNA polymerase sigma factor RpoS (330 aa).

The segment at 56–89 (DATQLYLGEIGYSPLLTAEEEVYFARRALRGDVA) is sigma-70 factor domain-1. Residues 94–164 (MIESNLRLVV…ERAIMNQTRT (71 aa)) form a sigma-70 factor domain-2 region. An Interaction with polymerase core subunit RpoC motif is present at residues 118–121 (DLIE). The tract at residues 174-249 (ELNVYLRTAR…DEKENGPEDT (76 aa)) is sigma-70 factor domain-3. Positions 262 to 315 (WLFELNAKQREVLARRFGLLGYEAATLEDVGREIGLTRERVRQIQVEGLRRLRE) are sigma-70 factor domain-4. Residues 288–307 (LEDVGREIGLTRERVRQIQV) constitute a DNA-binding region (H-T-H motif).

The protein belongs to the sigma-70 factor family. RpoS subfamily. In terms of assembly, interacts with the RNA polymerase core enzyme.

Its subcellular location is the cytoplasm. In terms of biological role, sigma factors are initiation factors that promote the attachment of RNA polymerase to specific initiation sites and are then released. This sigma factor is the master transcriptional regulator of the stationary phase and the general stress response. This is RNA polymerase sigma factor RpoS from Shigella flexneri.